A 310-amino-acid polypeptide reads, in one-letter code: N-acetylmuramic acid 6-phosphate etherase (310 aa).

Positions 64–227 constitute an SIS domain; the sequence is ITARLKSKGR…STSVMIKLGK (164 aa). Glu-92 serves as the catalytic Proton donor. Glu-123 is a catalytic residue.

The protein belongs to the GCKR-like family. MurNAc-6-P etherase subfamily. Homodimer.

It carries out the reaction N-acetyl-D-muramate 6-phosphate + H2O = N-acetyl-D-glucosamine 6-phosphate + (R)-lactate. It functions in the pathway amino-sugar metabolism; N-acetylmuramate degradation. Its function is as follows. Specifically catalyzes the cleavage of the D-lactyl ether substituent of MurNAc 6-phosphate, producing GlcNAc 6-phosphate and D-lactate. The protein is N-acetylmuramic acid 6-phosphate etherase of Prochlorococcus marinus (strain NATL1A).